Consider the following 28-residue polypeptide: Kalata-B12 (28 aa).

A cross-link (cyclopeptide (Gly-Asp)) is located at residues 1-28 (GSLCGDTCFVLGCNDSSCSCNYPICVKD). 3 cysteine pairs are disulfide-bonded: Cys4–Cys18, Cys8–Cys20, and Cys13–Cys25.

This is a cyclic peptide.

Functionally, probably participates in a plant defense mechanism. The chain is Kalata-B12 from Oldenlandia affinis.